The chain runs to 785 residues: Mitochondrial intermediate peptidase (785 aa).

The transit peptide at 1-43 directs the protein to the mitochondrion; the sequence is MLTRPAQNALLKSMQPLFRFRGCLLAKSTSTPRRDISTSSRKL. His567 provides a ligand contact to Zn(2+). Residue Glu568 is part of the active site. Zn(2+) contacts are provided by His571 and His574.

Belongs to the peptidase M3 family. The cofactor is Zn(2+).

It is found in the mitochondrion matrix. The enzyme catalyses Release of an N-terminal octapeptide as second stage of processing of some proteins imported into the mitochondrion.. Cleaves proteins, imported into the mitochondrion, to their mature size. While most mitochondrial precursor proteins are processed to the mature form in one step by mitochondrial processing peptidase (MPP), the sequential cleavage by MIP of an octapeptide after initial processing by MPP is a required step for a subgroup of nuclear-encoded precursor proteins destined for the matrix or the inner membrane. The polypeptide is Mitochondrial intermediate peptidase (OCT1) (Pleurotus djamor (Pink oyster mushroom)).